A 260-amino-acid chain; its full sequence is Neuraminyllactose-binding hemagglutinin (260 aa).

The signal sequence occupies residues 1 to 27; sequence MKANNHFKDFAWKKCLLGASVVALLVG. Residue Cys28 is the site of N-palmitoyl cysteine attachment. Cys28 carries S-diacylglycerol cysteine lipidation.

It is found in the cell outer membrane. The polypeptide is Neuraminyllactose-binding hemagglutinin (hpaA) (Helicobacter pylori (strain ATCC 700392 / 26695) (Campylobacter pylori)).